The primary structure comprises 99 residues: Small ribosomal subunit protein bS20 (99 aa).

It belongs to the bacterial ribosomal protein bS20 family.

In terms of biological role, binds directly to 16S ribosomal RNA. The chain is Small ribosomal subunit protein bS20 from Picosynechococcus sp. (strain ATCC 27264 / PCC 7002 / PR-6) (Agmenellum quadruplicatum).